The chain runs to 131 residues: Small ribosomal subunit protein uS11 (131 aa).

It belongs to the universal ribosomal protein uS11 family. In terms of assembly, part of the 30S ribosomal subunit. Interacts with proteins S7 and S18. Binds to IF-3.

Functionally, located on the platform of the 30S subunit, it bridges several disparate RNA helices of the 16S rRNA. Forms part of the Shine-Dalgarno cleft in the 70S ribosome. This Helicobacter pylori (strain Shi470) protein is Small ribosomal subunit protein uS11.